Reading from the N-terminus, the 175-residue chain is Large ribosomal subunit protein uL22y (175 aa).

The span at 153–163 shows a compositional bias: basic and acidic residues; the sequence is EKEEPVKKEPE. The interval 153–175 is disordered; sequence EKEEPVKKEPETQLAAKSKKSAA.

The protein belongs to the universal ribosomal protein uL22 family.

The chain is Large ribosomal subunit protein uL22y (RPL17B) from Arabidopsis thaliana (Mouse-ear cress).